The sequence spans 75 residues: Translational regulator CsrA (75 aa).

This sequence belongs to the CsrA/RsmA family. Homodimer; the beta-strands of each monomer intercalate to form a hydrophobic core, while the alpha-helices form wings that extend away from the core.

The protein resides in the cytoplasm. Its function is as follows. A translational regulator that binds mRNA to regulate translation initiation and/or mRNA stability. Usually binds in the 5'-UTR at or near the Shine-Dalgarno sequence preventing ribosome-binding, thus repressing translation. Its main target seems to be the major flagellin gene, while its function is anatagonized by FliW. The sequence is that of Translational regulator CsrA from Exiguobacterium sibiricum (strain DSM 17290 / CCUG 55495 / CIP 109462 / JCM 13490 / 255-15).